The primary structure comprises 78 residues: Large ribosomal subunit protein bL28 (78 aa).

The tract at residues M1–P31 is disordered.

It belongs to the bacterial ribosomal protein bL28 family.

The sequence is that of Large ribosomal subunit protein bL28 from Arthrobacter sp. (strain FB24).